Here is a 275-residue protein sequence, read N- to C-terminus: Large ribosomal subunit protein uL2 (275 aa).

Positions 224-257 are disordered; sequence AMNPIDHPHGGGEGRTAAGRDPVSPWGTPTKGFR.

This sequence belongs to the universal ribosomal protein uL2 family. As to quaternary structure, part of the 50S ribosomal subunit. Forms a bridge to the 30S subunit in the 70S ribosome.

One of the primary rRNA binding proteins. Required for association of the 30S and 50S subunits to form the 70S ribosome, for tRNA binding and peptide bond formation. It has been suggested to have peptidyltransferase activity; this is somewhat controversial. Makes several contacts with the 16S rRNA in the 70S ribosome. The chain is Large ribosomal subunit protein uL2 from Burkholderia mallei (strain NCTC 10247).